We begin with the raw amino-acid sequence, 206 residues long: Large ribosomal subunit protein mL62 (206 aa).

The transit peptide at 1-29 directs the protein to the mitochondrion; that stretch reads MATAWGLRWGLSRTGTLLLAPPARCARRA. At glutamine 90 the chain carries N5-methylglutamine.

Belongs to the prokaryotic/mitochondrial release factor family. Mitochondrion-specific ribosomal protein mL62 subfamily. Component of the mitochondrial ribosome large subunit (39S) which comprises a 16S rRNA and about 50 distinct proteins. Post-translationally, methylation of glutamine in the GGQ triplet by HEMK1.

It is found in the mitochondrion. It catalyses the reaction an N-acyl-L-alpha-aminoacyl-tRNA + H2O = an N-acyl-L-amino acid + a tRNA + H(+). Its function is as follows. Essential peptidyl-tRNA hydrolase component of the mitochondrial large ribosomal subunit. Acts as a codon-independent translation release factor that has lost all stop codon specificity and directs the termination of translation in mitochondrion, possibly in case of abortive elongation. May be involved in the hydrolysis of peptidyl-tRNAs that have been prematurely terminated and thus in the recycling of stalled mitochondrial ribosomes. This chain is Large ribosomal subunit protein mL62, found in Mus musculus (Mouse).